Consider the following 102-residue polypeptide: Small ribosomal subunit protein uS10 (102 aa).

It belongs to the universal ribosomal protein uS10 family. In terms of assembly, part of the 30S ribosomal subunit.

Functionally, involved in the binding of tRNA to the ribosomes. The polypeptide is Small ribosomal subunit protein uS10 (Methanobrevibacter smithii (strain ATCC 35061 / DSM 861 / OCM 144 / PS)).